Consider the following 303-residue polypeptide: Caspase-7 (303 aa).

Positions 1 to 21 (MADDQGCIEEQGVEDSANEDS) are enriched in acidic residues. The tract at residues 1 to 30 (MADDQGCIEEQGVEDSANEDSVDAKPDRSS) is disordered. Position 2 is an N-acetylalanine (alanine 2). Residues 2-23 (ADDQGCIEEQGVEDSANEDSVD) constitute a propeptide, N-terminally processed. At serine 30 the chain carries Phosphoserine; by PAK2. Serine 37 bears the Phosphoserine mark. Residues 38–41 (KKKK) form an exosite region. A loop L1 region spans residues 76-87 (KNFDKVTGMGVR). Histidine 144 is a catalytic residue. The residue at position 173 (threonine 173) is a Phosphothreonine; by PAK2. Residue cysteine 186 is part of the active site. The segment at 187 to 196 (RGTELDDGIQ) is loop L2. Residues 199-206 (SGPINDTD) constitute a propeptide that is removed on maturation. Residues 226 to 238 (VPGYYSWRSPGRG) are loop L3. Arginine 233 bears the (Microbial infection) ADP-riboxanated arginine mark. Position 239 is a phosphoserine; by PAK2 (serine 239). The interval 274–288 (ESQSDDPHFHEKKQI) is loop L4.

This sequence belongs to the peptidase C14A family. In terms of assembly, heterotetramer that consists of two anti-parallel arranged heterodimers, each one formed by a 20 kDa (p20) and a 11 kDa (p11) subunit. Interacts with XIAP (via its second BIR domain); inhibiting CASP7 activity. Interacts with BIRC6/bruce. Interacts with ATXN3 (short isoform 1). Interacts with HSPA5. Cleavage by different proteases, such as granzyme B (GZMB), caspase-1 (CASP1), caspase-8 (CASP8), caspase-9 (CASP9) or caspase-10 (CASP10) generate the two active subunits. Its involvement in different programmed cell death processes is probably specified by the protease that activates CASP7. Cleaved and activated by initiator caspases (CASP8, CASP9 and/or CASP10), leading to execution phase of apoptosis. Cleavage and maturation by GZMB regulates granzyme-mediated programmed cell death. Cleaved and activated by CASP1 in response to bacterial infection. Propeptide domains can also be cleaved efficiently by CASP3. Active heterodimers between the small subunit of caspase-7 and the large subunit of CASP3, and vice versa, also occur. Also cleaved at the N-terminus at alternative sites by CAPN1, leading to its activation. Post-translationally, phosphorylation at Ser-30 and Ser-239 by PAK2 inhibits its activity. Phosphorylation at Ser-30 prevents cleavage and activation by initiator caspase CASP9, while phosphorylation at Ser-239 prevents thiol protease activity by preventing substrate-binding. In terms of processing, (Microbial infection) ADP-riboxanation by C.violaceum CopC blocks CASP7 processing, preventing CASP7 activation and ability to recognize and cleave substrates. Ubiquitinated by BIRC6; this activity is inhibited by DIABLO/SMAC. As to expression, highly expressed in lung, skeletal muscle, liver, kidney, spleen and heart, and moderately in testis. No expression in the brain.

The protein localises to the cytoplasm. It localises to the cytosol. It is found in the nucleus. Its subcellular location is the secreted. The protein resides in the extracellular space. The catalysed reaction is Strict requirement for an Asp residue at position P1 and has a preferred cleavage sequence of Asp-Glu-Val-Asp-|-.. With respect to regulation, during activation, the N-terminal disordered prodomain is removed by cleavage. Concomitantly, double cleavage gives rise to a large Caspase-7 subunit p20 and a small Caspase-7 subunit p11. The two large and two small subunits then assemble to form the active CASP7 complex. Can be cleaved and activated by different caspases, depending on the context. Cleaved and activated by initiator caspases (CASP8, CASP9 and/or CASP10), leading to execution phase of apoptosis. Inhibited by XIAP, which directly binds to the active site pocket and obstructs substrate entry. Cleavage and maturation by GZMB regulates granzyme-mediated programmed cell death. Cleavage and maturation by CASP1 regulates pyroptosis. Phosphorylation at Ser-30 and Ser-239 by PAK2 inhibits its activity. Inhibited by isatin sulfonamides. Inhibited by 2-(2,4-Dichlorophenoxy)- N-(2-mercapto-ethyl)-acetamide (DICA) and 5-Fluoro-1H-indole-2- carboxylic acid (2-mercapto-ethyl)-amide (FICA) allosteric inhibitors, which disrupt an interaction between Arg-187 and Tyr-223. Specifically inhibited by DARPin D7.18 and D7.43, which specifically bind to the precursor CASP7 and prevent its processing and activation. Inhibited by BIRC6; following inhibition of BIRC6-caspase binding by DIABLO/SMAC, BIRC6 is subjected to caspase cleavage, leading to an increase in active caspases. Thiol protease involved in different programmed cell death processes, such as apoptosis, pyroptosis or granzyme-mediated programmed cell death, by proteolytically cleaving target proteins. Has a marked preference for Asp-Glu-Val-Asp (DEVD) consensus sequences, with some plasticity for alternate non-canonical sequences. Its involvement in the different programmed cell death processes is probably determined by upstream proteases that activate CASP7. Acts as an effector caspase involved in the execution phase of apoptosis: following cleavage and activation by initiator caspases (CASP8, CASP9 and/or CASP10), mediates execution of apoptosis by catalyzing cleavage of proteins, such as CLSPN, PARP1, PTGES3 and YY1. Compared to CASP3, acts as a minor executioner caspase and cleaves a limited set of target proteins. Acts as a key regulator of the inflammatory response in response to bacterial infection by catalyzing cleavage and activation of the sphingomyelin phosphodiesterase SMPD1 in the extracellular milieu, thereby promoting membrane repair. Regulates pyroptosis in intestinal epithelial cells: cleaved and activated by CASP1 in response to S.typhimurium infection, promoting its secretion to the extracellular milieu, where it catalyzes activation of SMPD1, generating ceramides that repair membranes and counteract the action of gasdermin-D (GSDMD) pores. Regulates granzyme-mediated programmed cell death in hepatocytes: cleaved and activated by granzyme B (GZMB) in response to bacterial infection, promoting its secretion to the extracellular milieu, where it catalyzes activation of SMPD1, generating ceramides that repair membranes and counteract the action of perforin (PRF1) pores. Following cleavage by CASP1 in response to inflammasome activation, catalyzes processing and inactivation of PARP1, alleviating the transcription repressor activity of PARP1. Acts as an inhibitor of type I interferon production during virus-induced apoptosis by mediating cleavage of antiviral proteins CGAS, IRF3 and MAVS, thereby preventing cytokine overproduction. Cleaves and activates sterol regulatory element binding proteins (SREBPs). Cleaves phospholipid scramblase proteins XKR4, XKR8 and XKR9. In case of infection, catalyzes cleavage of Kaposi sarcoma-associated herpesvirus protein ORF57, thereby preventing expression of viral lytic genes. Cleaves BIRC6 following inhibition of BIRC6-caspase binding by DIABLO/SMAC. Its function is as follows. Lacks enzymatic activity. The sequence is that of Caspase-7 from Homo sapiens (Human).